Here is a 219-residue protein sequence, read N- to C-terminus: Transcriptional activator protein rep2 (219 aa).

A zinc finger spans residues 177–197; that stretch reads CSKCNTTFNHSTALMMHEATC.

Functionally, transcriptional activator which interacts with the mcb binding subunit complex formed by res2 and cdc10. Rep2 is required for the mitotic cell cycle start. The polypeptide is Transcriptional activator protein rep2 (rep2) (Schizosaccharomyces pombe (strain 972 / ATCC 24843) (Fission yeast)).